We begin with the raw amino-acid sequence, 293 residues long: MSSSITPSLIAADLFSVDRLVAVVTGGATGIGLMIVKALEENGAKVYIIGRRKEVLDKVAKEEAKHGNIIPLQGDASSKPDLERIVAHITKETGYINLLVANAGISGPDPVRITPSTTLSELQRDLWSLDPSIFAQTFSVNVGTAYFSIAAFLPLLDAGNHKGNVVQSSQAIITSSIGAFGRVPLAHYAYSASKAAVTHMTKQFATALTKYKIRFNILAPGLYPSEMTAGIVKSFEQLSPEERATRVSPLGREGNTEDMAGCILWLASKAGAWLSGNVVVSDGGKLSVTPSSY.

NADP(+) is bound by residues I31 and N102. S175 (proton donor) is an active-site residue. 3 residues coordinate NADP(+): Y190, K194, and S225. Y190 serves as the catalytic Proton acceptor. The active-site Lowers pKa of active site Tyr is K194.

The protein belongs to the short-chain dehydrogenases/reductases (SDR) family.

Its function is as follows. Short-chain dehydrogenase/reductase; part of the gene cluster that mediates the biosynthesis of the phomopsins, a group of hexapeptide mycotoxins which infects lupins and causes lupinosis disease in livestock. The role of phomF' within the phomopsins biosynthesis pathway has still to be determined. The pathway starts with the processing of the precursor phomA by several endopeptidases including kexin proteases as well as the cluster-specific S41 family peptidase phomP1 and the oligopeptidase phomG to produce 10 identical copies of the hexapeptide Tyr-Val-Ile-Pro-Ile-Asp. After being excised from the precursor peptide, the core peptides are cyclized and modified post-translationally by enzymes encoded within the gene cluster. The timing and order of proteolysis of the phomA precursor and PTMs are still unknown. Two tyrosinase-like enzymes, phomQ1 and phomQ2, catalyze the chlorination and hydroxylation of Tyr, respectively. PhomYb, is proposed to be involved in the construction of the macrocyclic structure. The other 4 ustYa family proteins may be involved in PTMs that generate the unique structure of phomopsin A. PhomYa is required for the hydroxylation of C-beta of Tyr. PhomYc, phomYd, and phomYe are responsible for the biosynthesis of 2,3-dehydroisoleucine (dIle), 2,3-dehydroaspartic acid (dAsp), and 3,4-dehydroproline (dPro), respectively. While dIle formation by phomYc is indispensable for the installation of dAsp by phomYd, the order of the other PTMs have not been elucidated yet. Most of the biosynthetic enzymes likely have broad substrate specificity, and thus, there might be a metabolic grid from a precursor to phomopsin A. The enzyme(s) responsible for the biosynthesis of 3,4-dehydrovaline (dVal) have also not been identified yet. Finally, phomM acts as an S-adenosylmethionine-dependent alpha-N-methyltransferase that catalyzes two successive N-methylation reactions, converting N-desmethyl-phomopsin A to phomopsin A and phomopsin A further to an N,N-dimethylated congener called phomopsin E. This chain is Short-chain dehydrogenase/reductase PhomF', found in Diaporthe leptostromiformis (Lupinosis disease fungus).